A 112-amino-acid chain; its full sequence is UPF0342 protein SP_1372 (112 aa).

Belongs to the UPF0342 family.

This Streptococcus pneumoniae serotype 4 (strain ATCC BAA-334 / TIGR4) protein is UPF0342 protein SP_1372.